A 343-amino-acid polypeptide reads, in one-letter code: Labda-7,13(16),14-triene synthase (343 aa).

Positions 114 and 119 each coordinate Mg(2+). The short motif at 114 to 119 (DDVHVE) is the DDXXXE motif element. Arginine 206 contacts substrate. Residues asparagine 252, serine 256, and glutamate 260 each coordinate Mg(2+). Residues 252-260 (NDLYSFAYE) carry the NXXXSXXXE motif motif.

Belongs to the terpene synthase family. Requires Mg(2+) as cofactor.

The catalysed reaction is (13E)-labda-7,13-dien-15-yl diphosphate = labda-7,13(16),14-triene + diphosphate. Functionally, involved in the biosynthesis of the labdane-type bicyclic diterpene labda-7,13(16),14-triene. Catalyzes the conversion of labda-7,13(E)-dienyl diphosphate to yield labda-7,13(16),14-triene. This is Labda-7,13(16),14-triene synthase from Streptomyces clavuligerus.